The following is a 163-amino-acid chain: Peptide deformylase (163 aa).

Fe cation-binding residues include Cys91 and His133. Residue Glu134 is part of the active site. His137 contacts Fe cation.

The protein belongs to the polypeptide deformylase family. It depends on Fe(2+) as a cofactor.

It carries out the reaction N-terminal N-formyl-L-methionyl-[peptide] + H2O = N-terminal L-methionyl-[peptide] + formate. Functionally, removes the formyl group from the N-terminal Met of newly synthesized proteins. Requires at least a dipeptide for an efficient rate of reaction. N-terminal L-methionine is a prerequisite for activity but the enzyme has broad specificity at other positions. This chain is Peptide deformylase, found in Lachnoclostridium phytofermentans (strain ATCC 700394 / DSM 18823 / ISDg) (Clostridium phytofermentans).